The following is a 340-amino-acid chain: Ketol-acid reductoisomerase (NADP(+)) (340 aa).

The region spanning 1–183 (MAITVYYDKD…GGGRTGIIET (183 aa)) is the KARI N-terminal Rossmann domain. NADP(+) contacts are provided by residues 26–29 (FGSQ), arginine 49, serine 52, serine 54, and 84–87 (DEIQ). The active site involves histidine 109. NADP(+) is bound at residue glycine 135. The 146-residue stretch at 184–329 (TFKAETETDL…RNLRAMMPWI (146 aa)) folds into the KARI C-terminal knotted domain. Mg(2+) contacts are provided by aspartate 192, glutamate 196, glutamate 228, and glutamate 232. A substrate-binding site is contributed by serine 253.

The protein belongs to the ketol-acid reductoisomerase family. Mg(2+) is required as a cofactor.

It catalyses the reaction (2R)-2,3-dihydroxy-3-methylbutanoate + NADP(+) = (2S)-2-acetolactate + NADPH + H(+). It carries out the reaction (2R,3R)-2,3-dihydroxy-3-methylpentanoate + NADP(+) = (S)-2-ethyl-2-hydroxy-3-oxobutanoate + NADPH + H(+). Its pathway is amino-acid biosynthesis; L-isoleucine biosynthesis; L-isoleucine from 2-oxobutanoate: step 2/4. It participates in amino-acid biosynthesis; L-valine biosynthesis; L-valine from pyruvate: step 2/4. Its function is as follows. Involved in the biosynthesis of branched-chain amino acids (BCAA). Catalyzes an alkyl-migration followed by a ketol-acid reduction of (S)-2-acetolactate (S2AL) to yield (R)-2,3-dihydroxy-isovalerate. In the isomerase reaction, S2AL is rearranged via a Mg-dependent methyl migration to produce 3-hydroxy-3-methyl-2-ketobutyrate (HMKB). In the reductase reaction, this 2-ketoacid undergoes a metal-dependent reduction by NADPH to yield (R)-2,3-dihydroxy-isovalerate. The sequence is that of Ketol-acid reductoisomerase (NADP(+)) from Campylobacter jejuni subsp. jejuni serotype O:6 (strain 81116 / NCTC 11828).